Reading from the N-terminus, the 2336-residue chain is Genome polyprotein (2336 aa).

Positions 1-201 constitute a Peptidase C28 domain; it reads MNTTDCFIAL…WKAKVQKRLK (201 aa). Residues 1 to 1481 lie on the Cytoplasmic side of the membrane; the sequence is MNTTDCFIAL…SFVKRAFKRL (1481 aa). Residues cysteine 51, histidine 148, and aspartate 163 each act as for leader protease activity in the active site. 2 disordered regions span residues 197–218 and 238–265; these read QKRL…QSGN and QLGD…NTQN. A lipid anchor (N-myristoyl glycine; by host) is attached at glycine 202. 2 stretches are compositionally biased toward polar residues: residues 204 to 218 and 238 to 251; these read GQSS…QSGN and QLGD…SNEG. Residues 252 to 265 are compositionally biased toward low complexity; it reads STDTTSTHTTNTQN. Residues 789-797 are antigenic epitope; sequence ALLRAATYY. The short motif at 869–871 is the Cell attachment site element; the sequence is RGD. Residues 1190–1354 form the SF3 helicase domain; the sequence is NVHIANLCKV…DGYKVNNKLD (165 aa). Residue 1218-1225 coordinates ATP; sequence GKSGQGKS. The stretch at 1482-1502 is an intramembrane region; that stretch reads KENFEIVALCLTLLANIVIMI. Over 1503–2336 the chain is Cytoplasmic; that stretch reads RETRKRQQMV…NAVCGDAQSL (834 aa). The tract at residues 1556–1591 is disordered; sequence PGHRASDDVNSEPARPVEEQPQAEGPYTGPLERQKP. Tyrosine 1582, tyrosine 1605, and tyrosine 1629 each carry O-(5'-phospho-RNA)-tyrosine. A Peptidase C3 domain is found at 1653–1849; sequence APPTDLQKMV…YCSCVSRSML (197 aa). Catalysis depends on histidine 1696, which acts as the For protease 3C activity; Proton donor/acceptor. Catalysis depends on for protease 3C activity residues aspartate 1734 and cysteine 1813. A Nuclear localization signal motif is present at residues 1879-1887; that stretch reads MRKTKLAPT. One can recognise a RdRp catalytic domain in the interval 2097-2215; that stretch reads KNVWDVDYSA…ASDYDLDFEA (119 aa). The active-site For RdRp activity is the aspartate 2201.

This sequence belongs to the picornaviruses polyprotein family. In terms of assembly, interacts with host ISG15. As to quaternary structure, interacts (via R-G-D motif) with host ITGAV/ITGB6. Interacts with host MAVS; this interaction inhibits binding of host TRAF3 to MAVS, thereby suppressing interferon-mediated responses. Forms homooligomers. In terms of assembly, homohexamer. Interacts with host VIM. Interacts with host BECN1. As to quaternary structure, interacts with host DCTN3. Interacts with RNA-dependent RNA polymerase; this interaction allows 3B-1 to binds 2 polymerases and act as a primer. It also allows the recruitment of the RNA-dependent RNA polymerase to host membranes. In terms of assembly, interacts with RNA-dependent RNA polymerase; this interaction allows 3B-2 to act as a primer. As to quaternary structure, interacts with RNA-dependent RNA polymerase; this interaction allows 3B-3 to act as a primer. Interacts with 3B-1; this interaction allows 3B-1 to binds 2 polymerases and act as a primer. It also allows the recruitment of the RNA-dependent RNA polymerase to host membranes. Interacts with 3B-2; this interaction allows 3B-2 to act as a primer. Interacts with 3B-3; this interaction allows 3B-3 to act as a primer. In terms of processing, removes six residues from its own C-terminus, generating sLb(pro). Post-translationally, specific enzymatic cleavages in vivo by the viral proteases yield a variety of precursors and mature proteins. The polyprotein seems to be cotranslationally cleaved at the 2A/2B junction by a ribosomal skip from one codon to the next without formation of a peptide bond. This process would release the L-P1-2A peptide from the translational complex. During virion maturation, immature virions are rendered infectious following cleavage of VP0 into VP4 and VP2. This maturation seems to be an autocatalytic event triggered by the presence of RNA in the capsid and is followed by a conformational change of the particle. In terms of processing, myristoylation is required during RNA encapsidation and formation of the mature virus particle. Post-translationally, uridylylated by the polymerase and covalently linked to the 5'-end of genomic RNA. These uridylylated forms act as a nucleotide-peptide primer for the polymerase.

Its subcellular location is the host nucleus. It localises to the host cytoplasm. The protein resides in the virion. It is found in the host endoplasmic reticulum membrane. The protein localises to the host cytoplasmic vesicle membrane. The catalysed reaction is Autocatalytically cleaves itself from the polyprotein of the foot-and-mouth disease virus by hydrolysis of a Lys-|-Gly bond, but then cleaves host cell initiation factor eIF-4G at bonds -Gly-|-Arg- and -Lys-|-Arg-.. It carries out the reaction a ribonucleoside 5'-triphosphate + H2O = a ribonucleoside 5'-diphosphate + phosphate + H(+). The enzyme catalyses RNA(n) + a ribonucleoside 5'-triphosphate = RNA(n+1) + diphosphate. It catalyses the reaction Selective cleavage of Gln-|-Gly bond in the poliovirus polyprotein. In other picornavirus reactions Glu may be substituted for Gln, and Ser or Thr for Gly.. Its function is as follows. Autocatalytically cleaves itself from the polyprotein at the L/VP0 junction. Also cleaves the host translation initiation factors EIF4G1 and EIF4G3, in order to shut off the capped cellular mRNA transcription. Plays a role in counteracting host innate antiviral response using diverse mechanisms. Possesses a deubiquitinase activity acting on both 'Lys-48' and 'Lys-63'-linked polyubiquitin chains. In turn, inhibits the ubiquitination and subsequent activation of key signaling molecules of type I IFN response such as host RIGI, TBK1, TRAF3 and TRAF6. Inhibits host NF-kappa-B activity by inducing a decrease in RELA mRNA levels. Cleaves a peptide bond in the C-terminus of host ISG15, resulting in the damaging of this modifier that can no longer be attached to target proteins. Also cleaves host G3BP1 and G3BP2 in order to inhibit cytoplasmic stress granules assembly. Functionally, lies on the inner surface of the capsid shell. After binding to the host receptor, the capsid undergoes conformational changes. Capsid protein VP4 is released, capsid protein VP1 N-terminus is externalized, and together, they shape a pore in the host membrane through which the viral genome is translocated into the host cell cytoplasm. After genome has been released, the channel shrinks. Forms an icosahedral capsid of pseudo T=3 symmetry with capsid proteins VP1 and VP3. The capsid is composed of 60 copies of each capsid protein organized in the form of twelve pentamers and encloses the viral positive strand RNA genome. Upon acidifcation in the endosome, dissociates into pentamers. In terms of biological role, forms an icosahedral capsid of pseudo T=3 symmetry with capsid proteins VP0 and VP3. The capsid is composed of 60 copies of each capsid protein organized in the form of twelve pentamers and encloses the viral positive strand RNA genome. Upon acidifcation in the endosome, dissociates into pentamers. Its function is as follows. Forms an icosahedral capsid of pseudo T=3 symmetry with capsid proteins VP2 and VP3. The capsid is composed of 60 copies of each capsid protein organized in the form of twelve pentamers and encloses the viral positive strand RNA genome. Mediates cell entry by attachment to an integrin receptor, usually host ITGAV/ITGB6. In addition, targets host MAVS to suppress type I IFN pathway. Upon acidifcation in the endosome, dissociates into pentamers. Functionally, mediates self-processing of the polyprotein by a translational effect termed 'ribosome skipping'. Mechanistically, 2A-mediated cleavage occurs between the C-terminal glycine and the proline of the downstream protein 2B. In the case of foot-and-mouth disease virus, the 2A oligopeptide is post-translationally 'trimmed' from the C-terminus of the upstream protein 1D by 3C proteinase. Plays an essential role in the virus replication cycle by acting as a viroporin. Creates a pore in the host endoplasmic reticulum and as a consequence releases Ca2+ in the cytoplasm of infected cell. In turn, high levels of cytoplasmic calcium may trigger membrane trafficking and transport of viral ER-associated proteins to viroplasms, sites of viral genome replication. In terms of biological role, associates with and induces structural rearrangements of intracellular membranes. Triggers host autophagy by interacting with host BECN1 and thereby promotes viral replication. Participates in viral replication and interacts with host DHX9. Displays RNA-binding, nucleotide binding and NTPase activities. May play a role in virion morphogenesis and viral RNA encapsidation by interacting with the capsid protein VP3. Its function is as follows. Plays important roles in virus replication, virulence and host range. Cooperates with host DDX56 to inhibit IRF3 nuclear translocation and subsequent type I interferon production. Functionally, covalently linked to the 5'-end of both the positive-strand and negative-strand genomic RNAs. Acts as a genome-linked replication primer. Cysteine protease that generates mature viral proteins from the precursor polyprotein. In addition to its proteolytic activity, binds to viral RNA and thus influences viral genome replication. RNA and substrate bind cooperatively to the protease. In terms of biological role, RNA-directed RNA polymerase 3D-POL replicates genomic and antigenomic RNA by recognizing replications specific signals. Covalently attaches UMP to a tyrosine of VPg, which is used to prime RNA synthesis. The positive stranded RNA genome is first replicated at virus induced membranous vesicles, creating a dsRNA genomic replication form. This dsRNA is then used as template to synthesize positive stranded RNA genomes. ss(+)RNA genomes are either translated, replicated or encapsidated. This Foot-and-mouth disease virus (isolate -/Azerbaijan/A22-550/1965 serotype A) (FMDV) protein is Genome polyprotein.